A 304-amino-acid chain; its full sequence is Quinolinate synthase (304 aa).

2 residues coordinate iminosuccinate: His-23 and Ser-40. Cys-86 is a [4Fe-4S] cluster binding site. Residues 112-114 (YVN) and Ser-129 contribute to the iminosuccinate site. Cys-173 serves as a coordination point for [4Fe-4S] cluster. Iminosuccinate-binding positions include 199–201 (HPE) and Thr-216. Cys-260 lines the [4Fe-4S] cluster pocket.

This sequence belongs to the quinolinate synthase family. Type 2 subfamily. The cofactor is [4Fe-4S] cluster.

The protein resides in the cytoplasm. The catalysed reaction is iminosuccinate + dihydroxyacetone phosphate = quinolinate + phosphate + 2 H2O + H(+). It functions in the pathway cofactor biosynthesis; NAD(+) biosynthesis; quinolinate from iminoaspartate: step 1/1. In terms of biological role, catalyzes the condensation of iminoaspartate with dihydroxyacetone phosphate to form quinolinate. This is Quinolinate synthase from Methanothermobacter thermautotrophicus (strain ATCC 29096 / DSM 1053 / JCM 10044 / NBRC 100330 / Delta H) (Methanobacterium thermoautotrophicum).